Consider the following 277-residue polypeptide: Thiazole synthase (277 aa).

The active-site Schiff-base intermediate with DXP is Lys-116. 1-deoxy-D-xylulose 5-phosphate-binding positions include Gly-177, 203-204, and 225-226; these read AG and NT.

It belongs to the ThiG family. Homotetramer. Forms heterodimers with either ThiH or ThiS.

It is found in the cytoplasm. It catalyses the reaction [ThiS sulfur-carrier protein]-C-terminal-Gly-aminoethanethioate + 2-iminoacetate + 1-deoxy-D-xylulose 5-phosphate = [ThiS sulfur-carrier protein]-C-terminal Gly-Gly + 2-[(2R,5Z)-2-carboxy-4-methylthiazol-5(2H)-ylidene]ethyl phosphate + 2 H2O + H(+). The protein operates within cofactor biosynthesis; thiamine diphosphate biosynthesis. In terms of biological role, catalyzes the rearrangement of 1-deoxy-D-xylulose 5-phosphate (DXP) to produce the thiazole phosphate moiety of thiamine. Sulfur is provided by the thiocarboxylate moiety of the carrier protein ThiS. In vitro, sulfur can be provided by H(2)S. This is Thiazole synthase from Thermosynechococcus vestitus (strain NIES-2133 / IAM M-273 / BP-1).